Consider the following 231-residue polypeptide: Large ribosomal subunit protein uL1 (231 aa).

Belongs to the universal ribosomal protein uL1 family. Part of the 50S ribosomal subunit.

Its function is as follows. Binds directly to 23S rRNA. The L1 stalk is quite mobile in the ribosome, and is involved in E site tRNA release. Functionally, protein L1 is also a translational repressor protein, it controls the translation of the L11 operon by binding to its mRNA. The chain is Large ribosomal subunit protein uL1 from Nitrosomonas eutropha (strain DSM 101675 / C91 / Nm57).